A 1036-amino-acid polypeptide reads, in one-letter code: Multidrug resistance protein MdtC (1036 aa).

A run of 10 helical transmembrane segments spans residues 12 to 34, 336 to 353, 360 to 382, 431 to 450, 463 to 485, 528 to 547, 853 to 875, 895 to 917, 949 to 971, and 986 to 1008; these read VATT…LLPV, RALV…FLFL, LIPA…LCGF, VGFT…IPLL, FAIT…TPMM, WVLL…YINI, LFLI…ESYI, LELF…IGIV, LRFR…LVLS, and IVGG…YLCF.

It belongs to the resistance-nodulation-cell division (RND) (TC 2.A.6) family. MdtC subfamily. As to quaternary structure, part of a tripartite efflux system composed of MdtA, MdtB and MdtC. MdtC forms a heteromultimer with MdtB.

It localises to the cell inner membrane. This chain is Multidrug resistance protein MdtC, found in Photorhabdus laumondii subsp. laumondii (strain DSM 15139 / CIP 105565 / TT01) (Photorhabdus luminescens subsp. laumondii).